The sequence spans 131 residues: Small ribosomal subunit protein uS11 (131 aa).

This sequence belongs to the universal ribosomal protein uS11 family. In terms of assembly, part of the 30S ribosomal subunit.

Its function is as follows. Located on the platform of the 30S subunit. The polypeptide is Small ribosomal subunit protein uS11 (Methanospirillum hungatei JF-1 (strain ATCC 27890 / DSM 864 / NBRC 100397 / JF-1)).